The chain runs to 431 residues: Probable oxidoreductase OrdL (431 aa).

This chain is Probable oxidoreductase OrdL (ordL), found in Haemophilus influenzae (strain ATCC 51907 / DSM 11121 / KW20 / Rd).